The sequence spans 348 residues: Tripartite motif-containing protein 16-like protein (348 aa).

In terms of domain architecture, B30.2/SPRY spans 139 to 337 (YWTSKPEPST…RIVDLGEEPE (199 aa)).

This sequence belongs to the TRIM/RBCC family.

The protein localises to the cytoplasm. In Homo sapiens (Human), this protein is Tripartite motif-containing protein 16-like protein (TRIM16L).